The chain runs to 184 residues: Putative axial regulator YABBY 2 (184 aa).

Residues 15-42 form a C4-type zinc finger; sequence CSFCTTILAVSVPYASLFTLVTVRCGHC. 2 stretches are compositionally biased toward polar residues: residues 76 to 94 and 171 to 184; these read LVTRKDCASSSRSTNNLSE and LDQSVAGQKSNGYY. Disordered regions lie at residues 76–115 and 162–184; these read LVTRKDCASSSRSTNNLSENIDREAPRMPPIRPPEKRQRV and LDGNKKGKQLDQSVAGQKSNGYY.

Belongs to the YABBY family. Interacts with SPL/NZZ and SPEAR2. Expressed at low levels in abaxial regions of lateral aerial organ primordia leading to cotyledons, leaves, flower meristems, sepals, petals, stamen and carpels, but not in roots.

It is found in the nucleus. Involved in the abaxial cell fate determination during embryogenesis and organogenesis. This is Putative axial regulator YABBY 2 (YAB2) from Arabidopsis thaliana (Mouse-ear cress).